The sequence spans 1207 residues: MSALRWTRSAAGLGRVLRSPGPHRPPSEEGTFGGFCSSRRSSAASPREQHVLREWGHAELLEVLEARVRQLRAEGTPEMRVKKVQVDRPPQGHSSRWAQKLEAEKRVKQRRQKEVDQQKQALTQEFWTLHKEPKIWNKKLAGYLQPSKKGTPTNSEEKQLAQALQAALGRLSSREAEALARKKAKAVEAQILVLQQKFLAFFECCVCTGQVPLAHHVLVTHHNNGDRQQVLTLHMYNTVMLGWARKGSFRELVYVFLMLKDAGLSPDLCSYAAALQCMGRRDQDVRTIQRCLKQMMEEGFQPQLLFTDLVLEEEDRAALLRAVVKAEPAFRPPPQAPSPVNTSTLLKDIYSKEGPVSYPKLHLPLDTLQDLFYQQLHVELSSSVCVQSVEKAPVMSKEVIEARKTLQALREQWEVELLRVLRETKATMGRQAYEGQPTLYPFLCLLSEGEFVSILMQVLKVLPAQGEPLIQLAHNLGLRVLNRHLVKQKQVTNHVQKLGQRYSQYLQLLASDTQVAPCLPREYWESLGPLEAPAQQPWSVPVLLQLGKQLAELLVQAVQMPRSLAARQGAQRSIPVLYHVYSFRSYRQVGILKPHPAFTHLLETAAEPTLTFETTEVPMLCPPLPWTSLHSGAYLLSSTKLMRATEGTTQHQRLLEQCPPAQLHGPLDALTQLGNCAWRVNGHLLDLVLQIFRDKGCMPLGVPPPRSEAPRPARYQLPPGSTPVHKSELRKELARCLKVAREMHSLRSEALYRLSLAQHLRHRVFWLPHNMDFRGRTYPCPPHFNHLGSDLARALLEFAEGRPLGPRGLDWLKIHLINLTGLKKGDSLRMRLAFADEVMEEILDSADNPLTGRKWWMEADEPWQTLACCMEVAHAVRSPDPAAYISHLPVHQDGSCNGLQHYAALGRDSVGAASVNLTPSDLPQDVYREVATQVEEFRQQDAKEGLRVAQVLEGFISRKVVKQTVMTVVYGVTRYGGRLQIEKRLRELSDFPQEFVWEASHYLVRQVFKSLQEMFTSTRAIQHWLTESANLISHAGWPVEWVTPLGIPIIQPYHRESKVQVKGGLQSITLTSSVDESQKPNTLKQKNGFPPNFIHSLDSSHMMLTALHCYRKGLIFVSVHDCFWTHAADIPTMNEVCREQFVRLHSQPILEDLAKFLKKRFCSVSSIKSLKSSERALVTKLQETLQSLPKTGTFDLGQVIRSTYFFS.

A mitochondrion-targeting transit peptide spans 1–41 (MSALRWTRSAAGLGRVLRSPGPHRPPSEEGTFGGFCSSRRS). Disordered stretches follow at residues 1–48 (MSAL…SPRE) and 82–103 (KKVQ…KLEA). PPR repeat units lie at residues 232-266 (TLHM…GLSP) and 267-302 (DLCS…GFQP). Positions 702 to 724 (VPPPRSEAPRPARYQLPPGSTPV) are disordered. A mediates interaction with TEFM region spans residues 773–1207 (FRGRTYPCPP…QVIRSTYFFS (435 aa)). Catalysis depends on residues Asp-893, Lys-962, and Asp-1121.

This sequence belongs to the phage and mitochondrial RNA polymerase family. Homodimer. Component of the mitochondrial transcription initiation complex, composed at least of TFB2M, TFAM and POLRMT. In this complex TFAM recruits POLRMT to the promoter whereas TFB2M induces structural changes in POLRMT to enable promoter opening and trapping of the DNA non-template strand. Upon metabolic stress, forms a complex composed of FOXO3, SIRT3 and mitochondrial RNA polymerase POLRMT; the complex is recruited to mtDNA in a SIRT3-dependent manner. Also forms a complex composed of FOXO3, SIRT3, TFAM and POLRMT. Interacts with TFB1M and TFB2M, leading to the stimulation of transcription. Interacts with TEFM. Interacts with MTRES1.

The protein localises to the mitochondrion. It carries out the reaction RNA(n) + a ribonucleoside 5'-triphosphate = RNA(n+1) + diphosphate. Functionally, DNA-dependent RNA polymerase catalyzes the transcription of mitochondrial DNA into RNA using the four ribonucleoside triphosphates as substrates. Component of the mitochondrial transcription initiation complex, composed at least of TFB2M, TFAM and POLRMT that is required for basal transcription of mitochondrial DNA. In this complex, TFAM recruits POLRMT to a specific promoter whereas TFB2M induces structural changes in POLRMT to enable promoter opening and trapping of the DNA non-template strand. Has DNA primase activity. Catalyzes the synthesis of short RNA primers that are necessary for the initiation of lagging-strand DNA synthesis from the origin of light-strand DNA replication (OriL). The protein is DNA-directed RNA polymerase, mitochondrial of Mus musculus (Mouse).